We begin with the raw amino-acid sequence, 589 residues long: Sulfite reductase [NADPH] hemoprotein beta-component (589 aa).

The [4Fe-4S] cluster site is built by cysteine 443, cysteine 449, cysteine 488, and cysteine 492. Residue cysteine 492 participates in siroheme binding.

Belongs to the nitrite and sulfite reductase 4Fe-4S domain family. As to quaternary structure, alpha(8)-beta(8). The alpha component is a flavoprotein, the beta component is a hemoprotein. The cofactor is siroheme. [4Fe-4S] cluster serves as cofactor.

The enzyme catalyses hydrogen sulfide + 3 NADP(+) + 3 H2O = sulfite + 3 NADPH + 4 H(+). Its pathway is sulfur metabolism; hydrogen sulfide biosynthesis; hydrogen sulfide from sulfite (NADPH route): step 1/1. In terms of biological role, component of the sulfite reductase complex that catalyzes the 6-electron reduction of sulfite to sulfide. This is one of several activities required for the biosynthesis of L-cysteine from sulfate. The sequence is that of Sulfite reductase [NADPH] hemoprotein beta-component from Neisseria meningitidis serogroup C (strain 053442).